Reading from the N-terminus, the 211-residue chain is MAKTHEIKAERRADEGKGASRRLRHAGVIPAIVYGGELEPVSIQLNHEQIWLAQQNEWFYSSILDLNLNGDVQQVLLRDIQRHPFKQLIMHIDFQRVSANQKLSAAVPLHFINEEASPAGKSSEVVVTHELNEVQVVCLPKDLPEFIEVDLGALEVGNVIHLSEIKLPAGVEIPELKLGKERDVAVVAAKHVRIQEEDAAGEEGSEGAETK.

Basic and acidic residues predominate over residues Met-1–Gly-18. The interval Met-1–Ser-20 is disordered.

The protein belongs to the bacterial ribosomal protein bL25 family. CTC subfamily. In terms of assembly, part of the 50S ribosomal subunit; part of the 5S rRNA/L5/L18/L25 subcomplex. Contacts the 5S rRNA. Binds to the 5S rRNA independently of L5 and L18.

This is one of the proteins that binds to the 5S RNA in the ribosome where it forms part of the central protuberance. The sequence is that of Large ribosomal subunit protein bL25 from Xanthomonas oryzae pv. oryzae (strain MAFF 311018).